The sequence spans 295 residues: Iron-sulfur cluster carrier protein (295 aa).

38 to 45 lines the ATP pocket; the sequence is GKGGVGKS.

This sequence belongs to the Mrp/NBP35 ATP-binding proteins family. As to quaternary structure, homodimer.

Binds and transfers iron-sulfur (Fe-S) clusters to target apoproteins. Can hydrolyze ATP. This is Iron-sulfur cluster carrier protein from Pyrococcus horikoshii (strain ATCC 700860 / DSM 12428 / JCM 9974 / NBRC 100139 / OT-3).